We begin with the raw amino-acid sequence, 126 residues long: Holo-[acyl-carrier-protein] synthase (126 aa).

D9 and E58 together coordinate Mg(2+).

Belongs to the P-Pant transferase superfamily. AcpS family. Mg(2+) is required as a cofactor.

The protein resides in the cytoplasm. The enzyme catalyses apo-[ACP] + CoA = holo-[ACP] + adenosine 3',5'-bisphosphate + H(+). Transfers the 4'-phosphopantetheine moiety from coenzyme A to a Ser of acyl-carrier-protein. In Vibrio parahaemolyticus serotype O3:K6 (strain RIMD 2210633), this protein is Holo-[acyl-carrier-protein] synthase.